A 314-amino-acid chain; its full sequence is DDRGK domain-containing protein 1 (314 aa).

Residues 1 to 28 traverse the membrane as a helical segment; that stretch reads MVAPVWYLVAAALLVGFILFLTRSRGRA. A mediates interaction with CDK5RAP3 region spans residues 1-114; the sequence is MVAPVWYLVA…VEKPAETHLS (114 aa). At 29-314 the chain is on the cytoplasmic side; that stretch reads ASAGQEPLHN…GRESPAQAPA (286 aa). 2 disordered regions span residues 31-75 and 100-186; these read AGQE…SRLQ and QEEE…QREH. Residues serine 72 and serine 114 each carry the phosphoserine modification. A mediates interaction with TRIP4 region spans residues 118–216; that stretch reads GAKKLRKLEE…MTEEQSQSFL (99 aa). The segment covering 124 to 186 has biased composition (basic and acidic residues); that stretch reads KLEEKQARKA…AREEQAQREH (63 aa). The short motif at 195-209 is the UFM1-interacting motif (UFIM) element; sequence AFVVEEEGVGETMTE. A mediates interaction with UFL1 region spans residues 216 to 314; sequence LTEFINYIKQ…GRESPAQAPA (99 aa). The region spanning 229-273 is the PCI domain; that stretch reads VLLEDLASQVGLRTQDTINRIQDLLAEGTITGVIDDRGKFIYITP. Residue lysine 267 forms a Glycyl lysine isopeptide (Lys-Gly) (interchain with G-Cter in UFM1) linkage.

This sequence belongs to the DDRGK1 family. Component of the UFM1 ribosome E3 ligase (UREL) complex, composed of UFL1, DDRGK1 and CDK5RAP3. Interacts with (unphosphorylated) ERN1/IRE1-alpha; interaction is dependent on UFM1 and takes place in response to endoplasmic reticulum stress, regulating ERN1/IRE1-alpha stability. Interacts with NFKBIA. Interacts with SOX9. In terms of processing, ubiquitinated. Ubiquitination probably triggers proteasomal degradation and is negatively regulated by UFL1, the enzyme involved in the ufmylation of DDRGK1. Ufmylated; conjugated to ubiquitin-like protein UFM1, probably at Lys-267 by UFL1. The relevance of ufmylation is however unclear: as DDRGK1 acts as a substrate adapters for ufmylation, it is uncertain whether ufmylation is a collateral effect of ufmylation process or is required to regulate its activity. In terms of tissue distribution, widely expressed (at protein level). In the brain, highest levels in medulla oblongata, followed by cerebral cortex, cerebellum and frontal lobe.

It is found in the endoplasmic reticulum membrane. Functionally, component of the UFM1 ribosome E3 ligase (UREL) complex, a multiprotein complex that catalyzes ufmylation of endoplasmic reticulum-docked proteins. The UREL complex plays a key role in ribosome recycling by mediating mono-ufmylation of the RPL26/uL24 subunit of the 60S ribosome following ribosome dissociation: ufmylation weakens the junction between post-termination 60S subunits and SEC61 translocons, promoting release and recycling of the large ribosomal subunit from the endoplasmic reticulum membrane. Ufmylation of RPL26/uL24 and subsequent 60S ribosome recycling either take place after normal termination of translation or after ribosome stalling during cotranslational translocation at the endoplasmic reticulum. Within the UREL complex, DDRGK1 tethers the complex to the endoplasmic reticulum membrane to restrict its activity to endoplasmic reticulum-docked ribosomes and acts as an ufmylation 'reader': following RPL26/uL24 ufmylation, DDRGK1 specifically binds to ufmylated RPL26/uL24 via its UFIM motif, resulting in stable association between the 60S ribosome and the UREL complex, followed by dissociation of the 60S ribosome subunit from the endoplasmic reticulum membrane. The UREL complex is also involved in reticulophagy in response to endoplasmic reticulum stress by promoting ufmylation of proteins such as CYB5R3 and RPN1, thereby promoting lysosomal degradation of ufmylated proteins. Ufmylation-dependent reticulophagy inhibits the unfolded protein response (UPR) by regulating ERN1/IRE1-alpha stability. Acts as a regulator of immunity by promoting differentiation of B-cells into plasma cells: acts by promoting expansion of the endoplasmic reticulum and regulating the unfolded protein response (UPR). May also be required for TRIP4 ufmylation. May play a role in NF-kappa-B-mediated transcription through regulation of the phosphorylation and the degradation of NFKBIA, the inhibitor of NF-kappa-B. Plays a role in cartilage development through SOX9, inhibiting the ubiquitin-mediated proteasomal degradation of this transcriptional regulator. Required for stabilization and ufmylation of ATG9A. In Homo sapiens (Human), this protein is DDRGK domain-containing protein 1.